Consider the following 404-residue polypeptide: Cysteine desulfurase IscS (404 aa).

Residues 75 to 76, Asn-155, Gln-183, and 203 to 205 each bind pyridoxal 5'-phosphate; these read AT and SAH. An N6-(pyridoxal phosphate)lysine modification is found at Lys-206. A pyridoxal 5'-phosphate-binding site is contributed by Thr-243. Catalysis depends on Cys-328, which acts as the Cysteine persulfide intermediate. Cys-328 serves as a coordination point for [2Fe-2S] cluster.

Belongs to the class-V pyridoxal-phosphate-dependent aminotransferase family. NifS/IscS subfamily. In terms of assembly, homodimer. Forms a heterotetramer with IscU, interacts with other sulfur acceptors. Requires pyridoxal 5'-phosphate as cofactor.

It localises to the cytoplasm. The catalysed reaction is (sulfur carrier)-H + L-cysteine = (sulfur carrier)-SH + L-alanine. Its pathway is cofactor biosynthesis; iron-sulfur cluster biosynthesis. Functionally, master enzyme that delivers sulfur to a number of partners involved in Fe-S cluster assembly, tRNA modification or cofactor biosynthesis. Catalyzes the removal of elemental sulfur atoms from cysteine to produce alanine. Functions as a sulfur delivery protein for Fe-S cluster synthesis onto IscU, an Fe-S scaffold assembly protein, as well as other S acceptor proteins. In Vibrio vulnificus (strain CMCP6), this protein is Cysteine desulfurase IscS.